A 311-amino-acid chain; its full sequence is Delta(1)-pyrroline-2-carboxylate/Delta(1)-piperideine-2-carboxylate reductase (311 aa).

This sequence belongs to the ornithine cyclodeaminase/mu-crystallin family. In terms of assembly, homodimer.

It catalyses the reaction L-pipecolate + NAD(+) = Delta(1)-piperideine-2-carboxylate + NADH + H(+). The enzyme catalyses L-pipecolate + NADP(+) = Delta(1)-piperideine-2-carboxylate + NADPH + H(+). It carries out the reaction L-proline + NAD(+) = 1-pyrroline-2-carboxylate + NADH + H(+). The catalysed reaction is L-proline + NADP(+) = 1-pyrroline-2-carboxylate + NADPH + H(+). Its pathway is amino-acid degradation. In terms of biological role, catalyzes the reduction of both Delta(1)-pyrroline-2-carboxylate (Pyr2C) and Delta(1)-piperideine-2-carboxylate (Pip2C) to L-proline and L-pipecolate, respectively, using NADPH or NADH as the electron donor. Can also catalyze the reverse oxidation reactions, albeit at a much lower rate. Together with LhpH, is involved in a trans-3-hydroxy-L-proline (t3LHyp) degradation pathway to L-proline, which allows A.brasilense to grow on t3LHyp as a sole carbon source. Also appears to be involved in D-proline and D-lysine metabolism. Does not show ornithine cyclodeaminase (OCD) activity. The chain is Delta(1)-pyrroline-2-carboxylate/Delta(1)-piperideine-2-carboxylate reductase from Azospirillum brasilense.